A 273-amino-acid chain; its full sequence is Formamidopyrimidine-DNA glycosylase (273 aa).

Pro2 acts as the Schiff-base intermediate with DNA in catalysis. Glu3 serves as the catalytic Proton donor. Lys58 functions as the Proton donor; for beta-elimination activity in the catalytic mechanism. DNA-binding residues include His91 and Arg110. The FPG-type zinc-finger motif lies at 238–272 (QVYGKTGQPCPRCASMIVKIKLGGRGTHLCPHCQK). The active-site Proton donor; for delta-elimination activity is Arg262.

Belongs to the FPG family. As to quaternary structure, monomer. Requires Zn(2+) as cofactor.

It catalyses the reaction Hydrolysis of DNA containing ring-opened 7-methylguanine residues, releasing 2,6-diamino-4-hydroxy-5-(N-methyl)formamidopyrimidine.. It carries out the reaction 2'-deoxyribonucleotide-(2'-deoxyribose 5'-phosphate)-2'-deoxyribonucleotide-DNA = a 3'-end 2'-deoxyribonucleotide-(2,3-dehydro-2,3-deoxyribose 5'-phosphate)-DNA + a 5'-end 5'-phospho-2'-deoxyribonucleoside-DNA + H(+). Involved in base excision repair of DNA damaged by oxidation or by mutagenic agents. Acts as a DNA glycosylase that recognizes and removes damaged bases. Has a preference for oxidized purines, such as 7,8-dihydro-8-oxoguanine (8-oxoG). Has AP (apurinic/apyrimidinic) lyase activity and introduces nicks in the DNA strand. Cleaves the DNA backbone by beta-delta elimination to generate a single-strand break at the site of the removed base with both 3'- and 5'-phosphates. The polypeptide is Formamidopyrimidine-DNA glycosylase (Streptococcus thermophilus (strain CNRZ 1066)).